A 487-amino-acid polypeptide reads, in one-letter code: Chromosomal replication initiator protein DnaA (487 aa).

The interval 1–79 is domain I, interacts with DnaA modulators; it reads MPNSMWHQCL…QAPRVMMKVG (79 aa). Positions 78-138 are disordered; that stretch reads VGSAPKPTDP…PAPKAQAERR (61 aa). The tract at residues 79–150 is domain II; it reads GSAPKPTDPV…QVEGDIKHQS (72 aa). The segment at 151–367 is domain III, AAA+ region; that stretch reads FLNETFTFDT…GALRLVIANA (217 aa). The ATP site is built by glycine 195, glycine 197, lysine 198, and threonine 199. A domain IV, binds dsDNA region spans residues 368–487; sequence HFTGSEITPP…YQNFMRLLTT (120 aa).

This sequence belongs to the DnaA family. As to quaternary structure, oligomerizes as a right-handed, spiral filament on DNA at oriC.

The protein localises to the cytoplasm. Its function is as follows. Plays an essential role in the initiation and regulation of chromosomal replication. ATP-DnaA binds to the origin of replication (oriC) to initiate formation of the DNA replication initiation complex once per cell cycle. Binds the DnaA box (a 9 base pair repeat at the origin) and separates the double-stranded (ds)DNA. Forms a right-handed helical filament on oriC DNA; dsDNA binds to the exterior of the filament while single-stranded (ss)DNA is stabiized in the filament's interior. The ATP-DnaA-oriC complex binds and stabilizes one strand of the AT-rich DNA unwinding element (DUE), permitting loading of DNA polymerase. After initiation quickly degrades to an ADP-DnaA complex that is not apt for DNA replication. Binds acidic phospholipids. The protein is Chromosomal replication initiator protein DnaA of Marinobacter nauticus (strain ATCC 700491 / DSM 11845 / VT8) (Marinobacter aquaeolei).